The following is a 140-amino-acid chain: Methylglyoxal synthase (140 aa).

In terms of domain architecture, MGS-like spans 1–140; the sequence is MRSKPRIALI…DQAAADDAAP (140 aa). Residues histidine 12, lysine 16, 38 to 41, and 58 to 59 each bind substrate; these read TGTT and SG. The active-site Proton donor/acceptor is aspartate 64. Histidine 91 lines the substrate pocket.

Belongs to the methylglyoxal synthase family.

It carries out the reaction dihydroxyacetone phosphate = methylglyoxal + phosphate. In terms of biological role, catalyzes the formation of methylglyoxal from dihydroxyacetone phosphate. The chain is Methylglyoxal synthase from Cupriavidus metallidurans (strain ATCC 43123 / DSM 2839 / NBRC 102507 / CH34) (Ralstonia metallidurans).